Consider the following 331-residue polypeptide: Beta-ketoacyl-[acyl-carrier-protein] synthase III (331 aa).

Active-site residues include Cys-113 and His-253. Positions 254–258 are ACP-binding; that stretch reads QANTR. Asn-283 is a catalytic residue.

This sequence belongs to the thiolase-like superfamily. FabH family. In terms of assembly, homodimer.

It is found in the cytoplasm. It carries out the reaction malonyl-[ACP] + acetyl-CoA + H(+) = 3-oxobutanoyl-[ACP] + CO2 + CoA. It functions in the pathway lipid metabolism; fatty acid biosynthesis. Its function is as follows. Catalyzes the condensation reaction of fatty acid synthesis by the addition to an acyl acceptor of two carbons from malonyl-ACP. Catalyzes the first condensation reaction which initiates fatty acid synthesis and may therefore play a role in governing the total rate of fatty acid production. Possesses both acetoacetyl-ACP synthase and acetyl transacylase activities. Its substrate specificity determines the biosynthesis of branched-chain and/or straight-chain of fatty acids. This chain is Beta-ketoacyl-[acyl-carrier-protein] synthase III, found in Desulfitobacterium hafniense (strain Y51).